A 134-amino-acid polypeptide reads, in one-letter code: Large ribosomal subunit protein uL18 (134 aa).

Residues 1–25 are disordered; it reads MSNTAQNEKRLPVGKDISTRRRTAR. Basic and acidic residues predominate over residues 7–19; it reads NEKRLPVGKDIST.

This sequence belongs to the universal ribosomal protein uL18 family. Part of the 50S ribosomal subunit; part of the 5S rRNA/L5/L18/L25 subcomplex. Contacts the 5S and 23S rRNAs.

Functionally, this is one of the proteins that bind and probably mediate the attachment of the 5S RNA into the large ribosomal subunit, where it forms part of the central protuberance. The chain is Large ribosomal subunit protein uL18 from Corynebacterium jeikeium (strain K411).